Consider the following 46-residue polypeptide: Esculentin-1SEa (46 aa).

The cysteines at positions 40 and 46 are disulfide-linked.

As to expression, expressed by the skin glands.

The protein localises to the secreted. Functionally, mast cell degranulating peptide. Causes histamine release from rat peritoneal mast cells in vitro. Has antibacterial activity against the Gram-negative bacterium E.coli K12 and Gram-positive bacterium M.luteus NCT C2665. The sequence is that of Esculentin-1SEa from Lithobates sevosus (Dusky gopher frog).